Consider the following 436-residue polypeptide: Anhydro-N-acetylmuramic acid kinase (436 aa).

Residue Gly32 to Asp39 coordinates ATP.

It belongs to the anhydro-N-acetylmuramic acid kinase family.

The catalysed reaction is 1,6-anhydro-N-acetyl-beta-muramate + ATP + H2O = N-acetyl-D-muramate 6-phosphate + ADP + H(+). It functions in the pathway amino-sugar metabolism; 1,6-anhydro-N-acetylmuramate degradation. Its pathway is cell wall biogenesis; peptidoglycan recycling. Functionally, catalyzes the specific phosphorylation of 1,6-anhydro-N-acetylmuramic acid (anhMurNAc) with the simultaneous cleavage of the 1,6-anhydro ring, generating MurNAc-6-P. Is required for the utilization of anhMurNAc either imported from the medium or derived from its own cell wall murein, and thus plays a role in cell wall recycling. This Psychrobacter arcticus (strain DSM 17307 / VKM B-2377 / 273-4) protein is Anhydro-N-acetylmuramic acid kinase.